Consider the following 388-residue polypeptide: MAPISHYIGKTSLTTLAIGIAIGITVSNIVKFSSTQRRHFSSSGYIPDSPHSHGENDFVEGPDDSLSWHDEHSHSHKFENDSVARQLFKKVRVLCWVMTNPNNIHTKARHVKATWGKRCNVLLFMSSRADRDLPALALNVQEGRDNLWAKTKEAFKLIHSKYLETADWFIKCDDDTFLVLENLRYFLQDKSPSEPVYYGRKFKPIVQQGYMSGGAGYVLSKESLVRLVTQGIGHKEDCRADSGGAEDVEMGRCLQSVNVQAGDSRDELGRERFHPFVPEHHLIPDILPPDMWYWSYNFYPAKQGQECCSDYAISFHYVPPNMMYVLEYLVYHLKPYGITSAYESTEEQDHGSSHKDTDAMKPEGKGMEDKEDEETNISLAQTDSKHIS.

The Cytoplasmic portion of the chain corresponds to 1–12 (MAPISHYIGKTS). A helical; Signal-anchor for type II membrane protein membrane pass occupies residues 13–30 (LTTLAIGIAIGITVSNIV). Residues 31–388 (KFSSTQRRHF…LAQTDSKHIS (358 aa)) are Lumenal-facing. The disordered stretch occupies residues 43–65 (SGYIPDSPHSHGENDFVEGPDDS). N-linked (GlcNAc...) asparagine glycosylation occurs at Asn80. An intrachain disulfide couples Cys95 to Cys119. UDP is bound by residues Met98, Asn100, Glu142, Gly143, Arg144, Lys150, and Asp173. Positions 173 and 175 each coordinate Mn(2+). A disulfide bridge links Cys238 with Cys253. Trp292 contributes to the a glycoprotein binding site. Cysteines 307 and 308 form a disulfide. The UDP site is built by His316 and Tyr317. His316 provides a ligand contact to Mn(2+). The interval 344–388 (STEEQDHGSSHKDTDAMKPEGKGMEDKEDEETNISLAQTDSKHIS) is disordered. Positions 347 to 368 (EQDHGSSHKDTDAMKPEGKGME) are enriched in basic and acidic residues. Asn376 carries N-linked (GlcNAc...) asparagine glycosylation.

The protein belongs to the glycosyltransferase 31 family. Beta3-Gal-T subfamily. Homodimer; disulfide-linked. Mn(2+) is required as a cofactor.

It localises to the membrane. It carries out the reaction an N-acetyl-alpha-D-galactosaminyl derivative + UDP-alpha-D-galactose = a beta-D-galactosyl-(1-&gt;3)-N-acetyl-alpha-D-galactosaminyl derivative + UDP + H(+). The protein operates within protein modification; protein glycosylation. Its function is as follows. Glycosyltransferase that generates the core 1 O-glycan Gal-beta1-3GalNAc-alpha1-Ser/Thr (T antigen), which is a precursor for many extended O-glycans in glycoproteins. The protein is Glycoprotein-N-acetylgalactosamine 3-beta-galactosyltransferase 1 of Biomphalaria glabrata (Bloodfluke planorb).